A 355-amino-acid chain; its full sequence is Uroporphyrinogen decarboxylase (355 aa).

Substrate-binding positions include 36 to 40 (RQAGR), Asp85, Tyr160, Ser215, and His334.

It belongs to the uroporphyrinogen decarboxylase family. Homodimer.

Its subcellular location is the cytoplasm. It carries out the reaction uroporphyrinogen III + 4 H(+) = coproporphyrinogen III + 4 CO2. Its pathway is porphyrin-containing compound metabolism; protoporphyrin-IX biosynthesis; coproporphyrinogen-III from 5-aminolevulinate: step 4/4. Functionally, catalyzes the decarboxylation of four acetate groups of uroporphyrinogen-III to yield coproporphyrinogen-III. In Rhodococcus opacus (strain B4), this protein is Uroporphyrinogen decarboxylase.